The sequence spans 2049 residues: Polyglutamine-repeat protein pqn-41 (2049 aa).

Residues 1–58 form a disordered region; sequence MKPKKLQQGSDSAHTSDTESTKTCEKTAKKLPKTQKKLQKSKKTAKKRRDEEFRIFFP. The segment at 1–1601 is sufficient to prevent linker cell death; sequence MKPKKLQQGS…TTSQHQQSIQ (1601 aa). A compositionally biased stretch (basic and acidic residues) spans 14 to 28; sequence HTSDTESTKTCEKTA. Over residues 29–47 the composition is skewed to basic residues; the sequence is KKLPKTQKKLQKSKKTAKK. 2 coiled-coil regions span residues 264–302 and 396–432; these read RRQE…ANSD and TNAG…DRNH. The segment at 459 to 492 is disordered; sequence RGRNSTENSDSESSSEASEPPDDVITKEEPTDFS. A compositionally biased stretch (low complexity) spans 463–476; sequence STENSDSESSSEAS. Coiled coils occupy residues 686–730, 756–796, and 822–880; these read ESFE…SFET, ISAD…REFS, and QSSI…ARKL. Low complexity predominate over residues 1134–1150; sequence QQQHNHQNFQQQQQGNH. Disordered regions lie at residues 1134–1198, 1236–1265, 1481–1616, and 1636–1661; these read QQQH…ENAA, AAAA…QQQN, YKQS…GAAY, and ATPK…TSQA. Residues 1162–1171 are compositionally biased toward basic residues; that stretch reads QKRKYTKRKA. Over residues 1176-1194 the composition is skewed to polar residues; that stretch reads AVASSSDQNGMKSPGSSAM. Low complexity predominate over residues 1495–1533; that stretch reads STSSSSAAPASAPAPRAGAGAGATSSSAASSSTSTPSSS. A compositionally biased stretch (basic residues) spans 1534-1546; that stretch reads SHHKKSSPPHHQK. Low complexity-rich tracts occupy residues 1569–1604 and 1649–1661; these read SAPI…QFSQ and ATQQ…TSQA. Coiled-coil stretches lie at residues 1659–1685 and 1725–1801; these read SQAS…AAAA and QQYL…LQNI. A disordered region spans residues 1836 to 1858; it reads AQAQQAPPTSQPSQAATPQQQQQ. Coiled-coil stretches lie at residues 1863–1961 and 1991–2041; these read RQME…AAAA and SAQQ…AQQK.

Expressed in the linker cell just before it dies.

It is found in the cytoplasm. Its function is as follows. In males, required for non-apoptotic death of the linker cell once it has finished guiding gonad elongation at the end of larval development. May be involved in nuclear envelope crenellation in the linker cell. Functionally, in males, promotes linker cell survival. The chain is Polyglutamine-repeat protein pqn-41 from Caenorhabditis elegans.